We begin with the raw amino-acid sequence, 346 residues long: Phosphate acyltransferase (346 aa).

The protein belongs to the PlsX family. In terms of assembly, homodimer. Probably interacts with PlsY.

The protein resides in the cytoplasm. It catalyses the reaction a fatty acyl-[ACP] + phosphate = an acyl phosphate + holo-[ACP]. It functions in the pathway lipid metabolism; phospholipid metabolism. Functionally, catalyzes the reversible formation of acyl-phosphate (acyl-PO(4)) from acyl-[acyl-carrier-protein] (acyl-ACP). This enzyme utilizes acyl-ACP as fatty acyl donor, but not acyl-CoA. The chain is Phosphate acyltransferase from Geobacter sulfurreducens (strain ATCC 51573 / DSM 12127 / PCA).